A 471-amino-acid chain; its full sequence is Phosphatidylserine synthase 2 (471 aa).

A disordered region spans residues 1 to 26; that stretch reads MRRGERRVAGGSGSESPLLEGRRSTE. Residues 1-40 lie on the Cytoplasmic side of the membrane; sequence MRRGERRVAGGSGSESPLLEGRRSTESEVYDDGTNTFFWR. 3 positions are modified to phosphoserine: S12, S14, and S16. The helical transmembrane segment at 41–61 threads the bilayer; the sequence is AHTLTVLFILTCALGYVTLLE. The Lumenal portion of the chain corresponds to 62–74; sequence ETPQDTAYNTKRG. The helical transmembrane segment at 75 to 95 threads the bilayer; sequence IVASILVFLCFGVTQAKDGPF. At 96 to 104 the chain is on the cytoplasmic side; the sequence is SRPHPAYWR. A helical membrane pass occupies residues 105-125; that stretch reads FWLCVSVVYELFLIFILFQTV. The Lumenal segment spans residues 126 to 291; it reads HDGRQFLKYV…EWKPASSLHR (166 aa). N159 is a glycosylation site (N-linked (GlcNAc...) asparagine). Residues 292-312 form a helical membrane-spanning segment; it reads WLAVCGIILVFLLAELNTFYL. A topological domain (cytoplasmic) is located at residue K313. Residues 314 to 334 form a helical membrane-spanning segment; sequence FVLWMPPEHYLVLLRLVFFVN. Residues 335 to 354 are Lumenal-facing; it reads VGGVAMREIYDFMDELKPHR. A helical transmembrane segment spans residues 355-375; it reads KLGQQAWLVAAITVTELLIVV. At 376–381 the chain is on the cytoplasmic side; that stretch reads KYDPHT. Residues 382–402 form a helical membrane-spanning segment; the sequence is LTLSLPFYISQCWTLGSILVL. The Lumenal portion of the chain corresponds to 403–471; that stretch reads TWTVWRFFLR…PAEEGPSAAS (69 aa). The segment at 423 to 471 is disordered; sequence RQKQQSHQAINNGDGHPGPEDDLPGTGTAEEEGTTNDGVPAEEGPSAAS.

The protein belongs to the phosphatidyl serine synthase family.

Its subcellular location is the endoplasmic reticulum membrane. It catalyses the reaction a 1,2-diacyl-sn-glycero-3-phosphoethanolamine + L-serine = a 1,2-diacyl-sn-glycero-3-phospho-L-serine + ethanolamine. It carries out the reaction 1-hexadecanoyl-2-(9Z-octadecenoyl)-sn-glycero-3-phosphoethanolamine + L-serine = 1-hexadecanoyl-2-(9Z-octadecenoyl)-sn-glycero-3-phospho-L-serine + ethanolamine. The catalysed reaction is 1-hexadecanoyl-2-(4Z,7Z,10Z,13Z,16Z,19Z-docosahexaenoyl)-sn-glycero-3-phosphoethanolamine + L-serine = 1-hexadecanoyl-2-(4Z,7Z,10Z,13Z,16Z,19Z-docosahexaenoyl)-sn-glycero-3-phosphoserine + ethanolamine. The enzyme catalyses 1-octadecanoyl-2-(5Z,8Z,11Z,14Z)-eicosatetraenoyl-sn-glycero-3-phosphoethanolamine + L-serine = 1-octadecanoyl-2-(5Z,8Z,11Z,14Z)-eicosatetraenoyl-sn-glycero-3-phosphoserine + ethanolamine. It catalyses the reaction 1-octadecanoyl-2-(4Z,7Z,10Z,13Z,16Z,19Z-docosahexaenoyl)-sn-glycero-3-phosphoethanolamine + L-serine = 1-octadecanoyl-2-(4Z,7Z,10Z,13Z,16Z,19Z-docosahexaenoyl)-sn-glycero-3-phosphoserine + ethanolamine. It carries out the reaction 1-(1Z-octadecenyl)-2-(4Z,7Z,10Z,13Z,16Z,19Z-docosahexaenoyl)-sn-glycero-3-phosphoethanolamine + L-serine = 1-(1Z-octadecenyl)-2-(4Z,7Z,10Z,13Z,16Z,19Z-docosahexaenoyl)-sn-glycero-3-phospho-L-serine + ethanolamine. The catalysed reaction is 1-octadecanoyl-2-(9Z-octadecenoyl)-sn-glycero-3-phosphoethanolamine + L-serine = 1-octadecanoyl-2-(9Z-octadecenoyl)-sn-glycero-3-phospho-L-serine + ethanolamine. The enzyme catalyses 1-(1Z-octadecenyl)-2-(9Z-octadecenoyl)-sn-glycero-3-phosphoethanolamine + L-serine = 1-(1Z-octadecenyl)-2-(9Z-octadecenoyl)-sn-glycero-3-phospho-L-serine + ethanolamine. It catalyses the reaction 1-(1Z-octadecenyl)-2-(5Z,8Z,11Z,14Z- eicosatetraenoyl)-sn-glycero-3-phosphoethanolamine + L-serine = 1-(1Z-octadecenyl)-2-(5Z,8Z,11Z,14Z-eicosatetraenoyl)-sn-glycero-3-phospho-L-serine + ethanolamine. Its pathway is phospholipid metabolism; phosphatidylserine biosynthesis. In terms of biological role, catalyzes a base-exchange reaction in which the polar head group of phosphatidylethanolamine (PE) or phosphatidylcholine (PC) is replaced by L-serine. Catalyzes the conversion of phosphatatidylethanolamine and does not act on phosphatidylcholine. Can utilize both phosphatidylethanolamine (PE) plasmalogen and diacyl PE as substrate and the latter is six times better utilized, indicating the importance of an ester linkage at the sn-1 position. Although it shows no sn-1 fatty acyl preference, exhibits significant preference towards docosahexaenoic acid (22:6n-3) compared with 18:1 or 20:4 at the sn-2 position. The sequence is that of Phosphatidylserine synthase 2 (Ptdss2) from Rattus norvegicus (Rat).